A 202-amino-acid polypeptide reads, in one-letter code: uncharacterized protein (202 aa).

This is an uncharacterized protein from Saccharomyces cerevisiae (strain ATCC 204508 / S288c) (Baker's yeast).